The following is a 446-amino-acid chain: MSHMTPSEIVNELDDYIIGQHNAKRAVAIALRNRWRRMQLDETLRHEVTPKNILMIGPTGVGKTEIARRLAKLANAPFIKVEATKFTEVGYVGKEVDSIIRDLTDAAVKMVRLQSMEKNRFRAEERAEERILDVLIPQPTPNNWDKIEENNSSEPSSTRQHFRKKLREGQLNEKEIEINLAATPIGVEIMAPPGMEEMTNQLQSMFKNLAGQKQKSRKMKIKEAMKLLIEEEAAKLVNQEKIKEKAIEAVEQNGIVFIDEIDKICKRGDVSGPDVSSEGVQRDLLPLVEGCTVSTKHGMVKTDYILFIASGAFQVASPSDLIPELQGRLPIRVELEALTPKDFQLILTEPNASLTMQYIALMATEGVSISFTEDGIKRIAETAWQVNERTENIGARRLHTILELLMEDISYDASEWHGKTISIDADYVRSHLDDLVSDEDFSRFIL.

ATP contacts are provided by residues I18, 60 to 65 (GVGKTE), D259, E324, and R396.

It belongs to the ClpX chaperone family. HslU subfamily. A double ring-shaped homohexamer of HslV is capped on each side by a ring-shaped HslU homohexamer. The assembly of the HslU/HslV complex is dependent on binding of ATP.

The protein resides in the cytoplasm. In terms of biological role, ATPase subunit of a proteasome-like degradation complex; this subunit has chaperone activity. The binding of ATP and its subsequent hydrolysis by HslU are essential for unfolding of protein substrates subsequently hydrolyzed by HslV. HslU recognizes the N-terminal part of its protein substrates and unfolds these before they are guided to HslV for hydrolysis. In Baumannia cicadellinicola subsp. Homalodisca coagulata, this protein is ATP-dependent protease ATPase subunit HslU.